A 157-amino-acid polypeptide reads, in one-letter code: Large ribosomal subunit protein uL15 (157 aa).

The disordered stretch occupies residues 1-40 (MKLHELSDNPGATKKRMRIGRGPGSGKGKMGGRGIKGQKS). Residues 21 to 35 (RGPGSGKGKMGGRGI) are compositionally biased toward gly residues.

This sequence belongs to the universal ribosomal protein uL15 family. Part of the 50S ribosomal subunit.

Its function is as follows. Binds to the 23S rRNA. This chain is Large ribosomal subunit protein uL15, found in Ruegeria pomeroyi (strain ATCC 700808 / DSM 15171 / DSS-3) (Silicibacter pomeroyi).